Consider the following 206-residue polypeptide: Ribosomal RNA large subunit methyltransferase E (206 aa).

S-adenosyl-L-methionine is bound by residues Gly60, Trp62, Asp80, Asp96, and Asp121. Catalysis depends on Lys161, which acts as the Proton acceptor.

Belongs to the class I-like SAM-binding methyltransferase superfamily. RNA methyltransferase RlmE family.

It localises to the cytoplasm. It carries out the reaction uridine(2552) in 23S rRNA + S-adenosyl-L-methionine = 2'-O-methyluridine(2552) in 23S rRNA + S-adenosyl-L-homocysteine + H(+). Functionally, specifically methylates the uridine in position 2552 of 23S rRNA at the 2'-O position of the ribose in the fully assembled 50S ribosomal subunit. In Legionella pneumophila (strain Lens), this protein is Ribosomal RNA large subunit methyltransferase E.